We begin with the raw amino-acid sequence, 141 residues long: MPGLFAAKKLKDNRQNFRWKDTQYKRKTLGLNIKADPLEGSPQARGIVIEKVGIEAKQPNSAIRKCVRVQLIKNGKQITAFAPGDGAIGFIDEHDEVMIEGIGGPSGRSMGDIPGVRWKVTKVNNVALSEMVSGKIEKPVR.

It belongs to the universal ribosomal protein uS12 family. In terms of assembly, part of the 30S ribosomal subunit.

Functionally, with S4 and S5 plays an important role in translational accuracy. Located at the interface of the 30S and 50S subunits. This chain is Small ribosomal subunit protein uS12, found in Methanosphaera stadtmanae (strain ATCC 43021 / DSM 3091 / JCM 11832 / MCB-3).